The sequence spans 478 residues: D-ribulose kinase (478 aa).

A chloroplast-targeting transit peptide spans 1 to 38 (MLILRQFQISSFELFQSPKQTGFYSSSRSVPLPRTRFY). Residues Asp60, 64–67 (SGGR), and Asp278 contribute to the substrate site. ATP-binding positions include Ser300, Gly338, and 433–437 (GGAKN).

Belongs to the FGGY kinase family. It depends on a divalent metal cation as a cofactor.

It is found in the plastid. The protein resides in the chloroplast. It carries out the reaction D-ribulose + ATP = D-ribulose 5-phosphate + ADP + H(+). Functionally, exhibits ATP hydrolysis without substrate. Can phosphorylate D-ribulose with low efficiency. This is D-ribulose kinase from Arabidopsis thaliana (Mouse-ear cress).